The primary structure comprises 110 residues: UPF0145 protein BLD_1357 (110 aa).

This sequence belongs to the UPF0145 family.

This chain is UPF0145 protein BLD_1357, found in Bifidobacterium longum (strain DJO10A).